We begin with the raw amino-acid sequence, 475 residues long: 3-keto-steroid reductase ERG27 (475 aa).

Positions 32, 55, 59, and 65 each coordinate NADP(+). Catalysis depends on proton donor residues serine 249 and tyrosine 272. 4 residues coordinate NADP(+): tyrosine 272, lysine 276, valine 324, and serine 326. The Lowers pKa of active site Tyr role is filled by lysine 276.

This sequence belongs to the short-chain dehydrogenases/reductases (SDR) family. ERG27 subfamily. As to quaternary structure, heterotetramer of ERG25, ERG26, ERG27 and ERG28. ERG28 acts as a scaffold to tether ERG27 and other 4,4-demethylation-related enzymes, forming a demethylation enzyme complex, in the endoplasmic reticulum.

It localises to the endoplasmic reticulum membrane. The protein localises to the lipid droplet. The protein operates within steroid metabolism; ergosterol biosynthesis. 3-keto-steroid reductase; part of the third module of ergosterol biosynthesis pathway that includes the late steps of the pathway. ERG27 is a catalytic component of the C-4 demethylation complex that catalyzes the conversion of 4,4-dimethylfecosterol into fecosterol via 4-methylfecosterol. The third module or late pathway involves the ergosterol synthesis itself through consecutive reactions that mainly occur in the endoplasmic reticulum (ER) membrane. Firstly, the squalene synthase ERG9 catalyzes the condensation of 2 farnesyl pyrophosphate moieties to form squalene, which is the precursor of all steroids. Squalene synthase is crucial for balancing the incorporation of farnesyl diphosphate (FPP) into sterol and nonsterol isoprene synthesis. Secondly, squalene is converted into lanosterol by the consecutive action of the squalene epoxidase ERG1 and the lanosterol synthase ERG7. Then, the delta(24)-sterol C-methyltransferase ERG6 methylates lanosterol at C-24 to produce eburicol. Eburicol is the substrate of the sterol 14-alpha demethylase encoded by CYP51A, CYP51B and CYP51C, to yield 4,4,24-trimethyl ergosta-8,14,24(28)-trienol. CYP51B encodes the enzyme primarily responsible for sterol 14-alpha-demethylation, and plays an essential role in ascospore formation. CYP51A encodes an additional sterol 14-alpha-demethylase, induced on ergosterol depletion and responsible for the intrinsic variation in azole sensitivity. The third CYP51 isoform, CYP51C, does not encode a sterol 14-alpha-demethylase, but is required for full virulence on host wheat ears. The C-14 reductase ERG24 then reduces the C14=C15 double bond which leads to 4,4-dimethylfecosterol. A sequence of further demethylations at C-4, involving the C-4 demethylation complex containing the C-4 methylsterol oxidases ERG25, the sterol-4-alpha-carboxylate 3-dehydrogenase ERG26 and the 3-keto-steroid reductase ERG27, leads to the production of fecosterol via 4-methylfecosterol. ERG28 has a role as a scaffold to help anchor ERG25, ERG26 and ERG27 to the endoplasmic reticulum. The C-8 sterol isomerase ERG2 then catalyzes the reaction which results in unsaturation at C-7 in the B ring of sterols and thus converts fecosterol to episterol. The sterol-C5-desaturases ERG3A and ERG3BB then catalyze the introduction of a C-5 double bond in the B ring to produce 5-dehydroepisterol. The C-22 sterol desaturases ERG5A and ERG5B further convert 5-dehydroepisterol into ergosta-5,7,22,24(28)-tetraen-3beta-ol by forming the C-22(23) double bond in the sterol side chain. Finally, ergosta-5,7,22,24(28)-tetraen-3beta-ol is substrate of the C-24(28) sterol reductase ERG4 to produce ergosterol. The chain is 3-keto-steroid reductase ERG27 from Gibberella zeae (strain ATCC MYA-4620 / CBS 123657 / FGSC 9075 / NRRL 31084 / PH-1) (Wheat head blight fungus).